Consider the following 469-residue polypeptide: Argininosuccinate lyase (469 aa).

The protein belongs to the lyase 1 family. Argininosuccinate lyase subfamily.

The protein localises to the cytoplasm. It catalyses the reaction 2-(N(omega)-L-arginino)succinate = fumarate + L-arginine. The protein operates within amino-acid biosynthesis; L-arginine biosynthesis; L-arginine from L-ornithine and carbamoyl phosphate: step 3/3. The sequence is that of Argininosuccinate lyase from Polaromonas naphthalenivorans (strain CJ2).